Consider the following 670-residue polypeptide: DNA ligase (670 aa).

Residues Asp-35–Asp-39, Ser-84–Leu-85, and Glu-116 contribute to the NAD(+) site. Lys-118 functions as the N6-AMP-lysine intermediate in the catalytic mechanism. 4 residues coordinate NAD(+): Arg-139, Glu-176, Lys-293, and Lys-317. Zn(2+) is bound by residues Cys-411, Cys-414, Cys-429, and Cys-435. In terms of domain architecture, BRCT spans Val-592 to Ser-670.

Belongs to the NAD-dependent DNA ligase family. LigA subfamily. Mg(2+) is required as a cofactor. It depends on Mn(2+) as a cofactor.

The catalysed reaction is NAD(+) + (deoxyribonucleotide)n-3'-hydroxyl + 5'-phospho-(deoxyribonucleotide)m = (deoxyribonucleotide)n+m + AMP + beta-nicotinamide D-nucleotide.. Functionally, DNA ligase that catalyzes the formation of phosphodiester linkages between 5'-phosphoryl and 3'-hydroxyl groups in double-stranded DNA using NAD as a coenzyme and as the energy source for the reaction. It is essential for DNA replication and repair of damaged DNA. This Coxiella burnetii (strain RSA 331 / Henzerling II) protein is DNA ligase.